Reading from the N-terminus, the 101-residue chain is Urease subunit gamma (101 aa).

This sequence belongs to the urease gamma subunit family. In terms of assembly, heterotrimer of UreA (gamma), UreB (beta) and UreC (alpha) subunits. Three heterotrimers associate to form the active enzyme.

The protein localises to the cytoplasm. It catalyses the reaction urea + 2 H2O + H(+) = hydrogencarbonate + 2 NH4(+). Its pathway is nitrogen metabolism; urea degradation; CO(2) and NH(3) from urea (urease route): step 1/1. The protein is Urease subunit gamma of Corynebacterium kroppenstedtii (strain DSM 44385 / JCM 11950 / CIP 105744 / CCUG 35717).